The sequence spans 243 residues: Ubiquinone biosynthesis O-methyltransferase (243 aa).

S-adenosyl-L-methionine is bound by residues R45, G65, D86, and L130.

This sequence belongs to the methyltransferase superfamily. UbiG/COQ3 family.

It catalyses the reaction a 3-demethylubiquinol + S-adenosyl-L-methionine = a ubiquinol + S-adenosyl-L-homocysteine + H(+). The catalysed reaction is a 3-(all-trans-polyprenyl)benzene-1,2-diol + S-adenosyl-L-methionine = a 2-methoxy-6-(all-trans-polyprenyl)phenol + S-adenosyl-L-homocysteine + H(+). Its pathway is cofactor biosynthesis; ubiquinone biosynthesis. Functionally, O-methyltransferase that catalyzes the 2 O-methylation steps in the ubiquinone biosynthetic pathway. This Idiomarina loihiensis (strain ATCC BAA-735 / DSM 15497 / L2-TR) protein is Ubiquinone biosynthesis O-methyltransferase.